The sequence spans 430 residues: Enolase (430 aa).

Gln163 is a (2R)-2-phosphoglycerate binding site. Glu205 serves as the catalytic Proton donor. 3 residues coordinate Mg(2+): Asp242, Glu287, and Asp314. (2R)-2-phosphoglycerate is bound by residues Lys339, Arg368, Ser369, and Lys390. Lys339 serves as the catalytic Proton acceptor.

Belongs to the enolase family. The cofactor is Mg(2+).

The protein resides in the cytoplasm. The protein localises to the secreted. Its subcellular location is the cell surface. It catalyses the reaction (2R)-2-phosphoglycerate = phosphoenolpyruvate + H2O. Its pathway is carbohydrate degradation; glycolysis; pyruvate from D-glyceraldehyde 3-phosphate: step 4/5. In terms of biological role, catalyzes the reversible conversion of 2-phosphoglycerate (2-PG) into phosphoenolpyruvate (PEP). It is essential for the degradation of carbohydrates via glycolysis. The protein is Enolase of Bacillus pumilus (strain SAFR-032).